A 151-amino-acid chain; its full sequence is UPAR/Ly6 domain-containing protein crok (151 aa).

Positions 1 to 23 are cleaved as a signal peptide; the sequence is MKTLEKYILFAIVLCCLLQLGQA. At 24–128 the chain is on the lumenal side; the sequence is IKCWDCRSDN…KDGCNSAGIH (105 aa). Cystine bridges form between cysteine 26–cysteine 68, cysteine 29–cysteine 37, cysteine 51–cysteine 85, cysteine 100–cysteine 114, and cysteine 116–cysteine 122. The N-linked (GlcNAc...) asparagine glycan is linked to asparagine 43. Residue serine 124 is the site of GPI-anchor amidated serine attachment. Residues 125–151 constitute a propeptide, removed in mature form; the sequence is AGIHRLGLMGVLTGTLLSVIVAHLLRQ. Residues 129–149 traverse the membrane as a helical segment; that stretch reads RLGLMGVLTGTLLSVIVAHLL. Topologically, residues 150-151 are cytoplasmic; the sequence is RQ.

Belongs to the quiver family.

The protein localises to the vesicle. It localises to the membrane. Its subcellular location is the endomembrane system. Required for septate junction assembly, possibly by organizing the preassembly and transport of septate junction proteins including dlg1/disks large 1 and Nrx-IV/Neurexin-IV. Involved in paracellular barrier functions of trachea, hindgut and salivary gland mediated by epithelial cell septate junctions. This chain is UPAR/Ly6 domain-containing protein crok, found in Drosophila melanogaster (Fruit fly).